We begin with the raw amino-acid sequence, 305 residues long: UDP-N-acetylenolpyruvoylglucosamine reductase (305 aa).

Residues 34–199 (RVGGPAQVLF…TSARFRGEVK (166 aa)) form the FAD-binding PCMH-type domain. R179 is a catalytic residue. Catalysis depends on S228, which acts as the Proton donor. Residue E298 is part of the active site.

Belongs to the MurB family. Requires FAD as cofactor.

It is found in the cytoplasm. It carries out the reaction UDP-N-acetyl-alpha-D-muramate + NADP(+) = UDP-N-acetyl-3-O-(1-carboxyvinyl)-alpha-D-glucosamine + NADPH + H(+). Its pathway is cell wall biogenesis; peptidoglycan biosynthesis. Its function is as follows. Cell wall formation. The chain is UDP-N-acetylenolpyruvoylglucosamine reductase from Bradyrhizobium diazoefficiens (strain JCM 10833 / BCRC 13528 / IAM 13628 / NBRC 14792 / USDA 110).